The primary structure comprises 511 residues: Gap junction alpha-3 protein (511 aa).

An intramembrane segment occupies 2-15 (GDWSFLGRLLENAQ). Residues 16–19 (EHST) lie on the Cytoplasmic side of the membrane. A helical membrane pass occupies residues 20-40 (VIGKVWLTVLFIFRILVLGAA). At 41-71 (AEEVWGDEQSDFTCNTQQPGCENVCYDKAFP) the chain is on the extracellular side. 3 disulfide bridges follow: Cys-54/Cys-214, Cys-61/Cys-208, and Cys-65/Cys-203. The helical transmembrane segment at 72–92 (ISHIRFWVLQIIFVSTPTLIY) threads the bilayer. Residues 93-174 (LGHVLHIVRM…GALLRTYIFN (82 aa)) lie on the Cytoplasmic side of the membrane. A compositionally biased stretch (basic and acidic residues) spans 110–119 (EEELKKRGSV). Residues 110–143 (EEELKKRGSVKDNNYPGAATSGGGSGGGNNFKDP) form a disordered region. Residues 129–138 (TSGGGSGGGN) are compositionally biased toward gly residues. The chain crosses the membrane as a helical span at residues 175–195 (IIFKTLFEVGFIVGQYFLYGF). The Extracellular segment spans residues 196 to 223 (ELKPVYQCSRPPCPHTVDCFISRPTEKT). Residues 224–244 (IFIIFMLVVASVSLLLNMLEI) traverse the membrane as a helical segment. Residues 245–511 (YHLGWKKLKQ…SRARSDDLAV (267 aa)) are Cytoplasmic-facing. The tract at residues 397–511 (AEQQGKAPSS…SRARSDDLAV (115 aa)) is disordered. Composition is skewed to low complexity over residues 403 to 415 (APSS…TPSS) and 440 to 456 (TTTN…ASGS).

The protein belongs to the connexin family. In terms of assembly, a hemichannel or connexon is composed of a hexamer of connexins. A functional gap junction is formed by the apposition of two hemichannels. During early stages of lens development, interacts with the C-terminus of MIP. Detected in eye lens.

Its subcellular location is the cell membrane. It localises to the cell junction. The protein localises to the gap junction. Structural component of lens fiber gap junctions. Gap junctions are dodecameric channels that connect the cytoplasm of adjoining cells. They are formed by the docking of two hexameric hemichannels, one from each cell membrane. Small molecules and ions diffuse from one cell to a neighboring cell via the central pore. The chain is Gap junction alpha-3 protein (GJA3) from Gallus gallus (Chicken).